The following is a 284-amino-acid chain: Probable endonuclease 4 (284 aa).

Zn(2+) is bound by residues H69, H113, E148, D182, H185, H217, D230, H232, and E262.

It belongs to the AP endonuclease 2 family. Requires Zn(2+) as cofactor.

It carries out the reaction Endonucleolytic cleavage to 5'-phosphooligonucleotide end-products.. In terms of biological role, endonuclease IV plays a role in DNA repair. It cleaves phosphodiester bonds at apurinic or apyrimidinic (AP) sites, generating a 3'-hydroxyl group and a 5'-terminal sugar phosphate. The polypeptide is Probable endonuclease 4 (Bifidobacterium longum subsp. infantis (strain ATCC 15697 / DSM 20088 / JCM 1222 / NCTC 11817 / S12)).